Consider the following 506-residue polypeptide: MEEIQRYLQLERSQQHDFLYPLILQEYIYAFAHDRGFGRSILSEKSGYDNKSSLLIVKRLITRMYQQNHFLISPNDSNQNPFWARNNNLYSQIISEGFAFIVEIPFSLQLISCLEGKKIVKSQNLRSIHSIFPFLEDNFSHLNFVLDILIPHPVHVEILVQTLRYWVKDAASLHLLRFFLNEYCKWNSLITPKKASSSFSKRNQRLFLFLYNSHVCEYEAIFVFLRNQSSHLRSTSSGVLLERIYFYGKIERLVNVFVKVKDFQANLWLVKEPCMHYIRYQRKSILASKGTSLFMNKWKCYLVTFWQWHFSLWFHPRRIYINQLSNHSLEFLGYLSSVRMNPSVVRSQILENSFLINNAIKKFDTLVPIIPLIASLAKVKFCNVLGHPISKPVRADLSDSNIIDRFGRICRNLSHYHSGSSNKKSLYRIKYILRLSCARTLARKHKSTVRAFLKRLGSELLEEFLMSEEDVLFLTFPKVSSTLRGVYRSRIWYLDIVAINDLANHK.

It belongs to the intron maturase 2 family. MatK subfamily.

Its subcellular location is the plastid. The protein localises to the chloroplast. Functionally, usually encoded in the trnK tRNA gene intron. Probably assists in splicing its own and other chloroplast group II introns. This is Maturase K from Uncarina grandidieri (Mouse trap tree).